A 71-amino-acid chain; its full sequence is Small ribosomal subunit protein bS18 (71 aa).

This sequence belongs to the bacterial ribosomal protein bS18 family. As to quaternary structure, part of the 30S ribosomal subunit. Forms a tight heterodimer with protein bS6.

In terms of biological role, binds as a heterodimer with protein bS6 to the central domain of the 16S rRNA, where it helps stabilize the platform of the 30S subunit. This chain is Small ribosomal subunit protein bS18, found in Synechococcus sp. (strain JA-2-3B'a(2-13)) (Cyanobacteria bacterium Yellowstone B-Prime).